The sequence spans 492 residues: Glutamyl-tRNA(Gln) amidotransferase subunit A (492 aa).

Catalysis depends on charge relay system residues lysine 78 and serine 158. The active-site Acyl-ester intermediate is the serine 182.

Belongs to the amidase family. GatA subfamily. In terms of assembly, heterotrimer of A, B and C subunits.

The enzyme catalyses L-glutamyl-tRNA(Gln) + L-glutamine + ATP + H2O = L-glutaminyl-tRNA(Gln) + L-glutamate + ADP + phosphate + H(+). In terms of biological role, allows the formation of correctly charged Gln-tRNA(Gln) through the transamidation of misacylated Glu-tRNA(Gln) in organisms which lack glutaminyl-tRNA synthetase. The reaction takes place in the presence of glutamine and ATP through an activated gamma-phospho-Glu-tRNA(Gln). This Rhodopseudomonas palustris (strain HaA2) protein is Glutamyl-tRNA(Gln) amidotransferase subunit A.